Consider the following 230-residue polypeptide: 2,3-bisphosphoglycerate-dependent phosphoglycerate mutase (230 aa).

Substrate contacts are provided by residues 8 to 15, 21 to 22, Arg60, 87 to 90, Lys98, 114 to 115, and 183 to 184; these read RHGQSEWN, TG, ERHY, RR, and GN. The Tele-phosphohistidine intermediate role is filled by His9. Catalysis depends on Glu87, which acts as the Proton donor/acceptor.

The protein belongs to the phosphoglycerate mutase family. BPG-dependent PGAM subfamily.

It catalyses the reaction (2R)-2-phosphoglycerate = (2R)-3-phosphoglycerate. It participates in carbohydrate degradation; glycolysis; pyruvate from D-glyceraldehyde 3-phosphate: step 3/5. In terms of biological role, catalyzes the interconversion of 2-phosphoglycerate and 3-phosphoglycerate. This is 2,3-bisphosphoglycerate-dependent phosphoglycerate mutase from Lactobacillus acidophilus (strain ATCC 700396 / NCK56 / N2 / NCFM).